Consider the following 554-residue polypeptide: Urocanate hydratase (554 aa).

NAD(+)-binding positions include 52–53 (GG), Gln130, 176–178 (GMG), Glu196, Arg201, 242–243 (NA), 263–267 (QTSAH), 273–274 (YL), and Tyr322. Residue Cys410 is part of the active site. Residue Gly492 coordinates NAD(+).

Belongs to the urocanase family. NAD(+) is required as a cofactor.

It localises to the cytoplasm. The catalysed reaction is 4-imidazolone-5-propanoate = trans-urocanate + H2O. Its pathway is amino-acid degradation; L-histidine degradation into L-glutamate; N-formimidoyl-L-glutamate from L-histidine: step 2/3. Its function is as follows. Catalyzes the conversion of urocanate to 4-imidazolone-5-propionate. This is Urocanate hydratase from Shewanella halifaxensis (strain HAW-EB4).